A 309-amino-acid polypeptide reads, in one-letter code: UDP-N-acetylenolpyruvoylglucosamine reductase (309 aa).

An FAD-binding PCMH-type domain is found at 34–221 (RVGGPAQVLF…TAAREAAQPI (188 aa)). Arginine 179 is a catalytic residue. Serine 228 functions as the Proton donor in the catalytic mechanism. Glutamate 298 is a catalytic residue.

Belongs to the MurB family. FAD serves as cofactor.

Its subcellular location is the cytoplasm. The catalysed reaction is UDP-N-acetyl-alpha-D-muramate + NADP(+) = UDP-N-acetyl-3-O-(1-carboxyvinyl)-alpha-D-glucosamine + NADPH + H(+). The protein operates within cell wall biogenesis; peptidoglycan biosynthesis. Functionally, cell wall formation. The protein is UDP-N-acetylenolpyruvoylglucosamine reductase of Methylorubrum extorquens (strain CM4 / NCIMB 13688) (Methylobacterium extorquens).